Reading from the N-terminus, the 208-residue chain is AN1-type zinc finger protein 6 (208 aa).

An A20-type zinc finger spans residues 8–42 (SQVPMLCSTGCGFYGNPRTNGMCSVCYKEHLQRQN). The Zn(2+) site is built by cysteine 14, cysteine 18, cysteine 30, and cysteine 33. Polar residues predominate over residues 41 to 68 (QNSSNGRISPPATSVSSLSESLPVQCTD). The segment at 41–140 (QNSSNGRISP…PSEEQSKSLE (100 aa)) is disordered. Residue serine 49 is modified to Phosphoserine. Low complexity predominate over residues 75–94 (QSTLDSTSSSMQPSPVSNQS). Polar residues-rich tracts occupy residues 95-110 (LLSE…STSV) and 120-133 (LQAS…QPSE). The AN1-type zinc finger occupies 143 to 189 (KQKKNRCFMCRKKVGLTGFECRCGNVYCGVHRYSDVHNCSYNYKADA). Residues cysteine 149, cysteine 152, cysteine 163, cysteine 165, cysteine 170, histidine 173, histidine 179, and cysteine 181 each coordinate Zn(2+). Lysine 204 carries the post-translational modification N6-acetyllysine.

Interacts with PKN1. Interacts with TRAF2. Interacts with mono- and polyubiquitin. Interacts with PEX6. Interacts with PEX5 (Cys-linked ubiquitinated).

The protein localises to the cytoplasm. Functionally, involved in regulation of TNF-alpha induced NF-kappa-B activation and apoptosis. Involved in modulation of 'Lys-48'-linked polyubiquitination status of TRAF2 and decreases association of TRAF2 with RIPK1. Required for PTS1 target sequence-dependent protein import into peroxisomes and PEX5 stability; may cooperate with PEX6. In vitro involved in PEX5 export from the cytosol to peroxisomes. The chain is AN1-type zinc finger protein 6 (ZFAND6) from Pongo abelii (Sumatran orangutan).